A 174-amino-acid polypeptide reads, in one-letter code: Large ribosomal subunit protein uL10 (174 aa).

The protein belongs to the universal ribosomal protein uL10 family. Part of the ribosomal stalk of the 50S ribosomal subunit. The N-terminus interacts with L11 and the large rRNA to form the base of the stalk. The C-terminus forms an elongated spine to which L12 dimers bind in a sequential fashion forming a multimeric L10(L12)X complex.

Its function is as follows. Forms part of the ribosomal stalk, playing a central role in the interaction of the ribosome with GTP-bound translation factors. The protein is Large ribosomal subunit protein uL10 of Syntrophus aciditrophicus (strain SB).